A 210-amino-acid polypeptide reads, in one-letter code: Probable GTP-binding protein EngB (210 aa).

Positions Thr25 to Glu199 constitute an EngB-type G domain. GTP-binding positions include Gly33–Ser40, Gly60–Leu64, Asp78–Gly81, Thr145–Asp148, and Phe178–Ser180. Residues Ser40 and Thr62 each contribute to the Mg(2+) site.

This sequence belongs to the TRAFAC class TrmE-Era-EngA-EngB-Septin-like GTPase superfamily. EngB GTPase family. Mg(2+) serves as cofactor.

In terms of biological role, necessary for normal cell division and for the maintenance of normal septation. The sequence is that of Probable GTP-binding protein EngB from Shigella flexneri.